A 105-amino-acid polypeptide reads, in one-letter code: Large ribosomal subunit protein uL24 (105 aa).

The tract at residues 40–61 (RIKKHTPQSANERGASSGGIVT) is disordered.

This sequence belongs to the universal ribosomal protein uL24 family. Part of the 50S ribosomal subunit.

Functionally, one of two assembly initiator proteins, it binds directly to the 5'-end of the 23S rRNA, where it nucleates assembly of the 50S subunit. Its function is as follows. One of the proteins that surrounds the polypeptide exit tunnel on the outside of the subunit. This chain is Large ribosomal subunit protein uL24, found in Mycobacteroides abscessus (strain ATCC 19977 / DSM 44196 / CCUG 20993 / CIP 104536 / JCM 13569 / NCTC 13031 / TMC 1543 / L948) (Mycobacterium abscessus).